Here is a 302-residue protein sequence, read N- to C-terminus: Cuticle collagen dpy-13 (302 aa).

Triple-helical region regions lie at residues 106 to 135 (GPQG…PGKA), 154 to 210 (GPPG…EGLP), and 219 to 278 (GEPG…PGTP). Residues 108–284 (QGAPGAPGKP…PGTPGERGIC (177 aa)) form a disordered region. Positions 144–159 (TPPPCKPCPQGPPGAP) are enriched in pro residues. The segment covering 188-197 (PKGPNGAPGK) has biased composition (low complexity). Composition is skewed to pro residues over residues 247–257 (QPGPKGPPGPD) and 268–277 (QPGPVGPPGT).

This sequence belongs to the cuticular collagen family. As to quaternary structure, collagen polypeptide chains are complexed within the cuticle by disulfide bonds and other types of covalent cross-links.

Nematode cuticles are composed largely of collagen-like proteins. The cuticle functions both as an exoskeleton and as a barrier to protect the worm from its environment. Mutations in dpy-13 affects the body shape. In Caenorhabditis elegans, this protein is Cuticle collagen dpy-13 (dpy-13).